A 94-amino-acid polypeptide reads, in one-letter code: Large ribosomal subunit protein uL23cz (94 aa).

This sequence belongs to the universal ribosomal protein uL23 family. As to quaternary structure, part of the 50S ribosomal subunit.

It is found in the plastid. The protein resides in the chloroplast. Its function is as follows. Binds to 23S rRNA. This Agrostis stolonifera (Creeping bentgrass) protein is Large ribosomal subunit protein uL23cz (rpl23-A).